The primary structure comprises 430 residues: Ribosomal protein uS12 methylthiotransferase RimO (430 aa).

An MTTase N-terminal domain is found at 2–119 (ISVYSISLGC…WPEMIGRALG (118 aa)). [4Fe-4S] cluster-binding residues include Cys11, Cys46, Cys81, Cys145, Cys149, and Cys152. Residues 131–361 (STGPSYAYLK…MEVQAEISEE (231 aa)) enclose the Radical SAM core domain. The TRAM domain maps to 364–430 (EGFTGSDEDV…SRTYDLVALS (67 aa)).

Belongs to the methylthiotransferase family. RimO subfamily. Requires [4Fe-4S] cluster as cofactor.

The protein localises to the cytoplasm. The enzyme catalyses L-aspartate(89)-[ribosomal protein uS12]-hydrogen + (sulfur carrier)-SH + AH2 + 2 S-adenosyl-L-methionine = 3-methylsulfanyl-L-aspartate(89)-[ribosomal protein uS12]-hydrogen + (sulfur carrier)-H + 5'-deoxyadenosine + L-methionine + A + S-adenosyl-L-homocysteine + 2 H(+). Catalyzes the methylthiolation of an aspartic acid residue of ribosomal protein uS12. In Oleidesulfovibrio alaskensis (strain ATCC BAA-1058 / DSM 17464 / G20) (Desulfovibrio alaskensis), this protein is Ribosomal protein uS12 methylthiotransferase RimO.